The chain runs to 115 residues: NADH-ubiquinone oxidoreductase chain 3 (115 aa).

The next 3 membrane-spanning stretches (helical) occupy residues Leu3 to Trp23, Phe55 to Leu75, and Leu84 to Tyr104.

It belongs to the complex I subunit 3 family. As to quaternary structure, core subunit of respiratory chain NADH dehydrogenase (Complex I) which is composed of 45 different subunits. Interacts with TMEM186. Interacts with TMEM242.

It localises to the mitochondrion inner membrane. It catalyses the reaction a ubiquinone + NADH + 5 H(+)(in) = a ubiquinol + NAD(+) + 4 H(+)(out). In terms of biological role, core subunit of the mitochondrial membrane respiratory chain NADH dehydrogenase (Complex I) which catalyzes electron transfer from NADH through the respiratory chain, using ubiquinone as an electron acceptor. Essential for the catalytic activity of complex I. In Sigmodon hispidus (Hispid cotton rat), this protein is NADH-ubiquinone oxidoreductase chain 3.